The following is a 105-amino-acid chain: Urease subunit beta (105 aa).

The protein belongs to the urease beta subunit family. In terms of assembly, heterotrimer of UreA (gamma), UreB (beta) and UreC (alpha) subunits. Three heterotrimers associate to form the active enzyme.

It is found in the cytoplasm. It catalyses the reaction urea + 2 H2O + H(+) = hydrogencarbonate + 2 NH4(+). It functions in the pathway nitrogen metabolism; urea degradation; CO(2) and NH(3) from urea (urease route): step 1/1. In Shewanella halifaxensis (strain HAW-EB4), this protein is Urease subunit beta.